The primary structure comprises 147 residues: Ubiquitin-conjugating enzyme E2-17 kDa (147 aa).

The UBC core domain occupies 1-147 (MALKRINKEL…AREWTRKYAM (147 aa)). The active-site Glycyl thioester intermediate is the Cys85.

Belongs to the ubiquitin-conjugating enzyme family.

It carries out the reaction S-ubiquitinyl-[E1 ubiquitin-activating enzyme]-L-cysteine + [E2 ubiquitin-conjugating enzyme]-L-cysteine = [E1 ubiquitin-activating enzyme]-L-cysteine + S-ubiquitinyl-[E2 ubiquitin-conjugating enzyme]-L-cysteine.. Its pathway is protein modification; protein ubiquitination. In terms of biological role, catalyzes the covalent attachment of ubiquitin to other proteins. Mediates the selective degradation of short-lived and abnormal proteins. Required for proper telomere behavior during cell divisions and possibly for ubiquitination of proteins involved in postmeiotic stages of spermatogenesis. Deletion mutations are lethal in homozygotes. The polypeptide is Ubiquitin-conjugating enzyme E2-17 kDa (eff) (Drosophila melanogaster (Fruit fly)).